We begin with the raw amino-acid sequence, 115 residues long: Large ribosomal subunit protein bL19 (115 aa).

This sequence belongs to the bacterial ribosomal protein bL19 family.

This protein is located at the 30S-50S ribosomal subunit interface and may play a role in the structure and function of the aminoacyl-tRNA binding site. The polypeptide is Large ribosomal subunit protein bL19 (Pectobacterium atrosepticum (strain SCRI 1043 / ATCC BAA-672) (Erwinia carotovora subsp. atroseptica)).